We begin with the raw amino-acid sequence, 861 residues long: MAEILLTSVINKSVEIAGNLLIQEGKRLYWLKEDIDWLQREMRHIRSYVDNAKAKEAGGDSRVKNLLKDIQELAGDVEDLLDDFLPKIQQSNKFNYCLKRSSFADEFAMEIEKIKRRVVDIDRIRKTYNIIDTDNNNDDCVLLDRRRLFLHADETEIIGLDDDFNMLQAKLLNQDLHYGVVSIVGMPGLGKTTLAKKLYRLIRDQFECSGLVYVSQQPRASEILLDIAKQIGLTEQKMKENLEDNLRSLLKIKRYVFLLDDIWDVEIWDDLKLVLPECDSKVGSRIIITSRNSNVGRYIGGESSLHALQPLESEKSFELFTKKIFNFDDNNSWANASPDLVNIGRNIVGRCGGIPLAIVVTAGMLRARERTEHAWNRVLESMGHKVQDGCAKVLALSYNDLPIASRPCFLYFGLYPEDHEIRAFDLINMWIAEKFIVVNSGNRREAEDLAEDVLNDLVSRNLIQLAKRTYNGRISSCRIHDLLHSLCVDLAKESNFFHTAHDAFGDPGNVARLRRITFYSDNVMIEFFRSNPKLEKLRVLFCFAKDPSIFSHMAYFDFKLLHTLVVVMSQSFQAYVTIPSKFGNMTCLRYLRLEGNICGKLPNSIVKLTRLETIDIDRRSLIQPPSGVWESKHLRHLCYRDYGQACNSCFSISSFYPNIYSLHPNNLQTLMWIPDKFFEPRLLHRLINLRKLGILGVSNSTVKMLSIFSPVLKALEVLKLSFSSDPSEQIKLSSYPHIAKLHLNVNRTMALNSQSFPPNLIKLTLANFTVDRYILAVLKTFPKLRKLKMFICKYNEEKMDLSGEANGYSFPQLEVLHIHSPNGLSEVTCTDDVSMPKLKKLLLTGFHCRISLSERLKKLSK.

Residues 63 to 83 adopt a coiled-coil conformation; that stretch reads VKNLLKDIQELAGDVEDLLDD. Residues 162–388 enclose the NB-ARC domain; sequence DDFNMLQAKL…LESMGHKVQD (227 aa). ATP is bound at residue 185–192; it reads GMPGLGKT. LRR repeat units follow at residues 225–248, 305–327, 388–411, 449–472, 510–536, 585–608, 609–631, 652–680, 689–710, 712–735, 736–758, 784–810, and 811–835; these read LDIAKQIGLTEQKMKENLEDNLRS, LHALQPLESEKSFELFTKKIFNF, DGCAKVLALSYNDLPIASRPCFLY, LAEDVLNDLVSRNLIQLAKRTYNG, VARLRRITFYSDNVMIEFFRSNPKLEK, MTCLRYLRLEGNICGKLPNSIVKL, TRLETIDIDRRSLIQPPSGVWES, ISSFYPNIYSLHPNNLQTLMWIPDKFFEP, LRKLGILGVSNSTVKMLSIFSP, LKALEVLKLSFSSDPSEQIKLSSY, PHIAKLHLNVNRTMALNSQSFPP, LRKLKMFICKYNEEKMDLSGEANGYSF, and PQLEVLHIHSPNGLSEVTCTDDVSM.

It belongs to the disease resistance NB-LRR family. In terms of assembly, (Microbial infection) Interacts with tobamoviruses mouvement protein at the plasma membrane; this interaction triggers defense responses leading to programmed cell death. As to quaternary structure, binds to HSP90 proteins; this interaction seems required for defense responses toward tobamoviruses.

It is found in the cell membrane. Its function is as follows. Inhibitor of viral mouvements which confers resistance to some tobamoviruses including tomato mosaic virus (ToMV) (e.g. isolates L, W3 and SL-1) and tobacco mosaic virus (TMV), but not to resistance-breaking isolates (e.g. B7, LT1, LII, Ltbl, ToMV2, and ToMV1-2) ToMV and tomato brown rugose fruit virus (ToBRFV). Elicits a hypersensitive reaction in response to avirulent (Avr) movement proteins from resistance inducing tobamoviruses (e.g. ToMV and TMV) strains, thus leading to programmed cell death. The polypeptide is ToMV resistance protein Tm-2(GCR236) (Solanum lycopersicum (Tomato)).